The primary structure comprises 238 residues: Probable transcriptional regulatory protein SSU98_0387 (238 aa).

The protein belongs to the TACO1 family. YeeN subfamily.

The protein resides in the cytoplasm. The chain is Probable transcriptional regulatory protein SSU98_0387 from Streptococcus suis (strain 98HAH33).